Reading from the N-terminus, the 249-residue chain is Inhibitor of growth protein 4 (249 aa).

Positions 25–118 (FQLMRDLDQR…ADLKEKQIES (94 aa)) form a coiled coil. Residues Lys112, Lys127, and Lys129 each carry the N6-acetyllysine modification. A disordered region spans residues 115–163 (QIESSDYDSSSSKGKKKGRTQKEKKAARARSKGKNSDEEAPKAAQKKLK). Positions 127 to 148 (KGKKKGRTQKEKKAARARSKGK) match the Bipartite nuclear localization signal motif. Residue Arg133 is modified to Citrulline. N6-acetyllysine is present on residues Lys146, Lys148, and Lys156. Citrulline is present on Arg166. The segment at 196–245 (PTYCLCHQVSYGEMIGCDNPDCSIEWFHFACVGLTTKPRGKWFCPRCSQE) adopts a PHD-type zinc-finger fold. The Zn(2+) site is built by Cys199, Cys201, Cys212, Cys217, His223, Cys226, Cys239, and Cys242.

This sequence belongs to the ING family. As to quaternary structure, homodimer. Component of the HBO1 complex composed of KAT7/HBO1, MEAF6, ING4 or ING5, and one scaffold subunit: complexes containing BRPF scaffold (BRPF1, BRD1/BRPF2 or BRPF3) direct KAT7/HBO1 specificity towards H3K14ac, while complexes containing JADE scaffold (JADE1, JADE2 and JADE3) mediate acetylation of histone H4. Interacts with H3K4me3 and to a lesser extent with H3K4me2, the interaction augments KAT7/HBO1 acetylation activity on H3 tails. Interacts with EP300, RELA and TP53; these interactions may be indirect. Interacts with EGLN1. Interacts with BCL2A1. Citrullination by PADI4 within the nuclear localization signal disrupts the interaction with p53 and increases susceptibility to degradation. In terms of tissue distribution, isoform 2, isoform 3, isoform 4 and isoform 5 are expressed in the mammary gland, ovary, spleen and muscle. Expressed in the mammary gland, ovary, spleen and muscle.

The protein localises to the nucleus. Component of HBO1 complexes, which specifically mediate acetylation of histone H3 at 'Lys-14' (H3K14ac), and have reduced activity toward histone H4. Through chromatin acetylation it may function in DNA replication. May inhibit tumor progression by modulating the transcriptional output of signaling pathways which regulate cell proliferation. Can suppress brain tumor angiogenesis through transcriptional repression of RELA/NFKB3 target genes when complexed with RELA. May also specifically suppress loss of contact inhibition elicited by activated oncogenes such as MYC. Represses hypoxia inducible factor's (HIF) activity by interacting with HIF prolyl hydroxylase 2 (EGLN1). Can enhance apoptosis induced by serum starvation in mammary epithelial cell line HC11. This chain is Inhibitor of growth protein 4 (Ing4), found in Mus musculus (Mouse).